The sequence spans 432 residues: Trigger factor (432 aa).

A PPIase FKBP-type domain is found at Gly161 to Pro246.

Belongs to the FKBP-type PPIase family. Tig subfamily.

Its subcellular location is the cytoplasm. The enzyme catalyses [protein]-peptidylproline (omega=180) = [protein]-peptidylproline (omega=0). Involved in protein export. Acts as a chaperone by maintaining the newly synthesized protein in an open conformation. Functions as a peptidyl-prolyl cis-trans isomerase. This is Trigger factor from Vibrio vulnificus (strain CMCP6).